The following is an 84-amino-acid chain: Small ribosomal subunit protein bS20 (84 aa).

Basic residues predominate over residues 62-72 (KNKARRLKSRA). Residues 62-84 (KNKARRLKSRAARWSNSATAASR) form a disordered region. The span at 75 to 84 (WSNSATAASR) shows a compositional bias: polar residues.

Belongs to the bacterial ribosomal protein bS20 family.

Its function is as follows. Binds directly to 16S ribosomal RNA. The chain is Small ribosomal subunit protein bS20 from Mycoplasmoides gallisepticum (strain R(low / passage 15 / clone 2)) (Mycoplasma gallisepticum).